We begin with the raw amino-acid sequence, 270 residues long: Phosphatidylglycerol--prolipoprotein diacylglyceryl transferase (270 aa).

7 helical membrane-spanning segments follow: residues 10–30 (VAVA…LVGI), 56–76 (LIFW…VLFY), 92–112 (WKGG…AWWF), 120–140 (FFQL…AGRI), 175–195 (SQLY…NLYA), 202–222 (MAVS…VEFV), and 237–257 (VTMG…LIWL). Arginine 139 provides a ligand contact to a 1,2-diacyl-sn-glycero-3-phospho-(1'-sn-glycerol).

Belongs to the Lgt family.

The protein resides in the cell inner membrane. The catalysed reaction is L-cysteinyl-[prolipoprotein] + a 1,2-diacyl-sn-glycero-3-phospho-(1'-sn-glycerol) = an S-1,2-diacyl-sn-glyceryl-L-cysteinyl-[prolipoprotein] + sn-glycerol 1-phosphate + H(+). The protein operates within protein modification; lipoprotein biosynthesis (diacylglyceryl transfer). Its function is as follows. Catalyzes the transfer of the diacylglyceryl group from phosphatidylglycerol to the sulfhydryl group of the N-terminal cysteine of a prolipoprotein, the first step in the formation of mature lipoproteins. This chain is Phosphatidylglycerol--prolipoprotein diacylglyceryl transferase, found in Pseudomonas syringae pv. syringae (strain B728a).